Reading from the N-terminus, the 415-residue chain is Sucrose permease (415 aa).

The Cytoplasmic portion of the chain corresponds to methionine 1 to serine 16. Residues serine 17–leucine 37 form a helical membrane-spanning segment. Topologically, residues lysine 38–leucine 48 are periplasmic. Residues glycine 49–valine 69 traverse the membrane as a helical segment. Over glutamine 70 to lysine 77 the chain is Cytoplasmic. Residues proline 78 to tyrosine 98 form a helical membrane-spanning segment. Topologically, residues glutamate 99 to serine 107 are periplasmic. A helical transmembrane segment spans residues valine 108–leucine 128. The Cytoplasmic segment spans residues aspartate 129–arginine 147. The helical transmembrane segment at alanine 148–isoleucine 167 threads the bilayer. Topologically, residues serine 168–histidine 170 are periplasmic. The chain crosses the membrane as a helical span at residues isoleucine 171–phenylalanine 190. At lysine 191 to tryptophan 220 the chain is on the cytoplasmic side. The helical transmembrane segment at valine 221–phenylalanine 241 threads the bilayer. Residues proline 242–glycine 260 lie on the Periplasmic side of the membrane. A helical transmembrane segment spans residues tyrosine 261–valine 281. Residues asparagine 282 to lysine 287 lie on the Cytoplasmic side of the membrane. Residues asparagine 288–valine 308 traverse the membrane as a helical segment. Residues asparagine 309–tryptophan 311 are Periplasmic-facing. A helical transmembrane segment spans residues isoleucine 312–phenylalanine 332. The Cytoplasmic segment spans residues lysine 333–arginine 342. A helical transmembrane segment spans residues leucine 343–leucine 363. Topologically, residues serine 364–glutamine 377 are periplasmic. Residues threonine 378–leucine 398 traverse the membrane as a helical segment. The Cytoplasmic segment spans residues serine 399 to isoleucine 415.

This sequence belongs to the major facilitator superfamily. Oligosaccharide:H(+) symporter (OHS) (TC 2.A.1.5) family.

Its subcellular location is the cell inner membrane. Its pathway is glycan biosynthesis; sucrose metabolism. In terms of biological role, responsible for transport of sucrose into the cell, with the concomitant import of a proton (symport system). Can also transport maltose, fructose or lactulose, but not glucose, lactose or melibiose. The substrate specificity is directed toward the fructofuranosyl moiety of the substrate. This Escherichia coli protein is Sucrose permease.